The primary structure comprises 289 residues: MKIIVPATSANIGPGFDSVGVAVTKYLQIEVCEERDEWLIEHQIGKWIPHDERNLLLKIALQIVPDLQPRRLKMTSDVPLARGLGSSSSVIVAGIELANQLGQLNLSDHEKLQLATKIEGHPDNVAPAIYGNLVIASSVEGQVSAIVADFPECDFLAYIPNYELRTRDSRSVLPKKLSYKEAVAASSIANVAVAALLAGDMVTAGQAIEGDLFHERYRQDLVREFAMIKQVTKENGAYATYLSGAGPTVMVLASHDKMPTIKAELEKQPFKGKLHDLRVDTQGVRVEAK.

ATP is bound at residue 79–89 (PLARGLGSSSS).

The protein belongs to the GHMP kinase family. Homoserine kinase subfamily.

Its subcellular location is the cytoplasm. The enzyme catalyses L-homoserine + ATP = O-phospho-L-homoserine + ADP + H(+). It functions in the pathway amino-acid biosynthesis; L-threonine biosynthesis; L-threonine from L-aspartate: step 4/5. In terms of biological role, catalyzes the ATP-dependent phosphorylation of L-homoserine to L-homoserine phosphate. This Streptococcus pneumoniae serotype 2 (strain D39 / NCTC 7466) protein is Homoserine kinase.